We begin with the raw amino-acid sequence, 515 residues long: Lysosomal acid glucosylceramidase (515 aa).

The first 19 residues, 1-19, serve as a signal peptide directing secretion; it reads MAARLIGFFLFQAVSWAYG. Cystine bridges form between cysteine 23–cysteine 35 and cysteine 37–cysteine 42. N-linked (GlcNAc...) asparagine glycans are attached at residues asparagine 38 and asparagine 78. Asparagine 165 is a glycosylation site (N-linked (GlcNAc...) (high mannose) asparagine). The Proton donor role is filled by glutamate 254. Asparagine 289 is a glycosylation site (N-linked (GlcNAc...) asparagine). Residue glutamate 358 is the Nucleophile of the active site. Residue asparagine 480 is glycosylated (N-linked (GlcNAc...) asparagine).

This sequence belongs to the glycosyl hydrolase 30 family. In terms of assembly, interacts with saposin-C. Interacts with SCARB2. Interacts with TCP1. Interacts with GRN; this interaction prevents aggregation of GBA1-SCARB2 complex via interaction with HSPA1A upon stress.

The protein localises to the lysosome membrane. The enzyme catalyses a beta-D-glucosyl-(1&lt;-&gt;1')-N-acylsphing-4-enine + H2O = an N-acylsphing-4-enine + D-glucose. The catalysed reaction is a beta-D-galactosyl-(1&lt;-&gt;1')-N-acylsphing-4-enine + H2O = an N-acylsphing-4-enine + D-galactose. It carries out the reaction cholesteryl 3-beta-D-glucoside + H2O = cholesterol + D-glucose. It catalyses the reaction a beta-D-glucosyl-(1&lt;-&gt;1')-N-acylsphing-4-enine + cholesterol = cholesteryl 3-beta-D-glucoside + an N-acylsphing-4-enine. The enzyme catalyses beta-D-glucosyl-(1&lt;-&gt;1')-N-hexadecanoylsphing-4-enine + cholesterol = cholesteryl 3-beta-D-glucoside + N-hexadecanoylsphing-4-enine. The catalysed reaction is beta-D-glucosyl-N-(9Z-octadecenoyl)-sphing-4E-enine + cholesterol = N-(9Z-octadecenoyl)-sphing-4-enine + cholesteryl 3-beta-D-glucoside. It carries out the reaction beta-D-glucosyl-N-octanoylsphing-4E-enine + cholesterol = N-octanoylsphing-4-enine + cholesteryl 3-beta-D-glucoside. It catalyses the reaction beta-D-glucosyl-N-dodecanoylsphing-4-enine + cholesterol = N-dodecanoylsphing-4-enine + cholesteryl 3-beta-D-glucoside. The enzyme catalyses beta-D-glucosyl-(1&lt;-&gt;1)-N-octadecanoylsphing-4-enine + cholesterol = N-octadecanoylsphing-4-enine + cholesteryl 3-beta-D-glucoside. The catalysed reaction is beta-D-glucosyl-(1&lt;-&gt;1')-N-(15Z-tetracosenoyl)-sphing-4-enine + cholesterol = N-(15Z-tetracosenoyl)-sphing-4-enine + cholesteryl 3-beta-D-glucoside. It carries out the reaction a beta-D-galactosyl-(1&lt;-&gt;1')-N-acylsphing-4-enine + cholesterol = cholesteryl 3-beta-D-galactoside + an N-acylsphing-4-enine. It catalyses the reaction 1-(beta-D-galactosyl)-N-dodecanoylsphing-4-enine + cholesterol = cholesteryl 3-beta-D-galactoside + N-dodecanoylsphing-4-enine. The enzyme catalyses a beta-D-xylosyl-(1&lt;-&gt;1')-N-acylsphing-4-enine + cholesterol = cholesteryl 3-beta-D-xyloside + an N-acylsphing-4-enine. The catalysed reaction is beta-D-xylosyl-(1&lt;-&gt;1')-N-(9Z-octadecenoyl)-sphing-4-enine + cholesterol = cholesteryl 3-beta-D-xyloside + N-(9Z-octadecenoyl)-sphing-4-enine. The protein operates within steroid metabolism; cholesterol metabolism. It participates in sphingolipid metabolism. With respect to regulation, inhibited by conduritol B epoxide/CBE. Its function is as follows. Glucosylceramidase that catalyzes, within the lysosomal compartment, the hydrolysis of glucosylceramides/GlcCers (such as beta-D-glucosyl-(1&lt;-&gt;1')-N-acylsphing-4-enine) into free ceramides (such as N-acylsphing-4-enine) and glucose. Plays a central role in the degradation of complex lipids and the turnover of cellular membranes. Through the production of ceramides, participates in the PKC-activated salvage pathway of ceramide formation. Catalyzes the glucosylation of cholesterol, through a transglucosylation reaction where glucose is transferred from GlcCer to cholesterol. GlcCer containing mono-unsaturated fatty acids (such as beta-D-glucosyl-N-(9Z-octadecenoyl)-sphing-4-enine) are preferred as glucose donors for cholesterol glucosylation when compared with GlcCer containing same chain length of saturated fatty acids (such as beta-D-glucosyl-N-octadecanoyl-sphing-4-enine). Under specific conditions, may alternatively catalyze the reverse reaction, transferring glucose from cholesteryl 3-beta-D-glucoside to ceramide. Can also hydrolyze cholesteryl 3-beta-D-glucoside producing glucose and cholesterol. Catalyzes the hydrolysis of galactosylceramides/GalCers (such as beta-D-galactosyl-(1&lt;-&gt;1')-N-acylsphing-4-enine), as well as the transfer of galactose between GalCers and cholesterol in vitro, but with lower activity than with GlcCers. Contrary to GlcCer and GalCer, xylosylceramide/XylCer (such as beta-D-xyosyl-(1&lt;-&gt;1')-N-acylsphing-4-enine) is not a good substrate for hydrolysis, however it is a good xylose donor for transxylosylation activity to form cholesteryl 3-beta-D-xyloside. The protein is Lysosomal acid glucosylceramidase (Gba1) of Mus musculus (Mouse).